The sequence spans 253 residues: Imidazole glycerol phosphate synthase subunit HisF (253 aa).

Active-site residues include Asp-11 and Asp-130.

The protein belongs to the HisA/HisF family. Heterodimer of HisH and HisF.

The protein resides in the cytoplasm. The catalysed reaction is 5-[(5-phospho-1-deoxy-D-ribulos-1-ylimino)methylamino]-1-(5-phospho-beta-D-ribosyl)imidazole-4-carboxamide + L-glutamine = D-erythro-1-(imidazol-4-yl)glycerol 3-phosphate + 5-amino-1-(5-phospho-beta-D-ribosyl)imidazole-4-carboxamide + L-glutamate + H(+). The protein operates within amino-acid biosynthesis; L-histidine biosynthesis; L-histidine from 5-phospho-alpha-D-ribose 1-diphosphate: step 5/9. Functionally, IGPS catalyzes the conversion of PRFAR and glutamine to IGP, AICAR and glutamate. The HisF subunit catalyzes the cyclization activity that produces IGP and AICAR from PRFAR using the ammonia provided by the HisH subunit. The chain is Imidazole glycerol phosphate synthase subunit HisF from Clostridium botulinum (strain 657 / Type Ba4).